The sequence spans 834 residues: Mannosyl-oligosaccharide glucosidase (834 aa).

Over residues 1–10 (MARGERRRRA) the composition is skewed to basic residues. Residues 1–36 (MARGERRRRAAAAEGARPLERARGAGRRDGRAGGAR) lie on the Cytoplasmic side of the membrane. A disordered region spans residues 1–37 (MARGERRRRAAAAEGARPLERARGAGRRDGRAGGARG). The Endoplasmic reticulum targeting motif lies at 3-9 (RGERRRR). Positions 17–31 (RPLERARGAGRRDGR) are enriched in basic and acidic residues. Residues 37 to 57 (GSAGGAALAVVVLALAFGLSG) form a helical; Signal-anchor for type II membrane protein membrane-spanning segment. Topologically, residues 58 to 834 (RWVLAWLGVR…LVLLIMAEEY (777 aa)) are lumenal. The segment at 74 to 136 (PAPSALPPDS…GTPPKLRHTC (63 aa)) is required for endoplasmic reticulum targeting. D580 acts as the Proton donor in catalysis. A glycan (N-linked (GlcNAc...) asparagine) is linked at N654. E804 acts as the Proton acceptor in catalysis.

Belongs to the glycosyl hydrolase 63 family.

The protein localises to the endoplasmic reticulum membrane. It catalyses the reaction N(4)-(alpha-D-Glc-(1-&gt;2)-alpha-D-Glc-(1-&gt;3)-alpha-D-Glc-(1-&gt;3)-alpha-D-Man-(1-&gt;2)-alpha-D-Man-(1-&gt;2)-alpha-D-Man-(1-&gt;3)-[alpha-D-Man-(1-&gt;2)-alpha-D-Man-(1-&gt;3)-[alpha-D-Man-(1-&gt;2)-alpha-D-Man-(1-&gt;6)]-alpha-D-Man-(1-&gt;6)]-beta-D-Man-(1-&gt;4)-beta-D-GlcNAc-(1-&gt;4)-beta-D-GlcNAc)-L-asparaginyl-[protein] + H2O = N(4)-(alpha-D-Glc-(1-&gt;3)-alpha-D-Glc-(1-&gt;3)-alpha-D-Man-(1-&gt;2)-alpha-D-Man-(1-&gt;2)-alpha-D-Man-(1-&gt;3)-[alpha-D-Man-(1-&gt;2)-alpha-D-Man-(1-&gt;3)-[alpha-D-Man-(1-&gt;2)-alpha-D-Man-(1-&gt;6)]-alpha-D-Man-(1-&gt;6)]-beta-D-Man-(1-&gt;4)-beta-D-GlcNAc-(1-&gt;4)-beta-D-GlcNAc)-L-asparaginyl-[protein] + beta-D-glucose. It functions in the pathway glycan metabolism; N-glycan degradation. In the context of N-glycan degradation, cleaves the distal alpha 1,2-linked glucose residue from the Glc(3)Man(9)GlcNAc(2) oligosaccharide precursor in a highly specific manner. This Rattus norvegicus (Rat) protein is Mannosyl-oligosaccharide glucosidase.